A 209-amino-acid polypeptide reads, in one-letter code: GTP cyclohydrolase 1 (209 aa).

The Zn(2+) site is built by Cys-89, His-92, and Cys-163.

This sequence belongs to the GTP cyclohydrolase I family. As to quaternary structure, toroid-shaped homodecamer, composed of two pentamers of five dimers.

It carries out the reaction GTP + H2O = 7,8-dihydroneopterin 3'-triphosphate + formate + H(+). Its pathway is cofactor biosynthesis; 7,8-dihydroneopterin triphosphate biosynthesis; 7,8-dihydroneopterin triphosphate from GTP: step 1/1. The polypeptide is GTP cyclohydrolase 1 (Sulfolobus acidocaldarius (strain ATCC 33909 / DSM 639 / JCM 8929 / NBRC 15157 / NCIMB 11770)).